The following is a 681-amino-acid chain: U3 small nucleolar ribonucleoprotein protein MPP10 (681 aa).

Ser61, Ser120, and Ser139 each carry phosphoserine. Over residues 105 to 147 (SLLPESEEQEREEDGSEIEADDKEDLEDLEEEEVSDMGNDDPE) the composition is skewed to acidic residues. 2 disordered regions span residues 105–202 (SLLP…IVDD) and 216–364 (NIEK…EKRQ). A coiled-coil region spans residues 109–138 (ESEEQEREEDGSEIEADDKEDLEDLEEEEV). The span at 148–162 (MGERAENSSKSDLRK) shows a compositional bias: basic and acidic residues. Phosphoserine is present on residues Ser163, Ser167, and Ser171. Residues 180–190 (LEQQSKVQNKG) are compositionally biased toward polar residues. Composition is skewed to basic and acidic residues over residues 193–202 (KPREKSIVDD) and 216–226 (NIEKEEERKDD). Positions 205-239 (FKLSEMEAYLENIEKEEERKDDNDEEEEDIDFFED) form a coiled coil. Residues 227–247 (NDEEEEDIDFFEDIDSDEDEG) show a composition bias toward acidic residues. Phosphoserine is present on Ser242. The segment covering 253-264 (KKLKSGKSSRNL) has biased composition (basic residues). 2 positions are modified to phosphoserine: Ser275 and Ser289. Over residues 280-290 (TNVHDDELDSN) the composition is skewed to basic and acidic residues. Coiled-coil stretches lie at residues 284-324 (DDEL…NKQH) and 348-382 (NVKKNSDEVKSSFEKRQEKMNEKIASLEKELLEKK). Over residues 291–318 (KEDDEIAEEEAEELSISETDEDDDLQEN) the composition is skewed to acidic residues. Over residues 319 to 329 (EDNKQHKESLK) the composition is skewed to basic and acidic residues. Residue Lys350 forms a Glycyl lysine isopeptide (Lys-Gly) (interchain with G-Cter in SUMO2) linkage. Basic and acidic residues predominate over residues 351 to 364 (KNSDEVKSSFEKRQ). Glycyl lysine isopeptide (Lys-Gly) (interchain with G-Cter in SUMO2) cross-links involve residues Lys382 and Lys394. The stretch at 469-490 (LAEIYEQEYIKLNQQKTAEEEN) forms a coiled coil. Residue Lys555 forms a Glycyl lysine isopeptide (Lys-Gly) (interchain with G-Cter in SUMO2) linkage. Basic and acidic residues predominate over residues 558 to 575 (NKAGDIKTAAEKTATDKK). Residues 558–606 (NKAGDIKTAAEKTATDKKRERRKKKYQKRMKIKEKEKRRKLLEKSSVDQ) form a disordered region. Residues 574–604 (KKRERRKKKYQKRMKIKEKEKRRKLLEKSSV) adopt a coiled-coil conformation. The span at 576–598 (RERRKKKYQKRMKIKEKEKRRKL) shows a compositional bias: basic residues. Position 609 is an N6-acetyllysine (Lys609). Residues Lys632 and Lys649 each participate in a glycyl lysine isopeptide (Lys-Gly) (interchain with G-Cter in SUMO2) cross-link. Residues 648–670 (SKLQDQVKMQINDAKKTEKKKKK) adopt a coiled-coil conformation. The tract at residues 660–681 (DAKKTEKKKKKRQDISVHKLKL) is disordered. Residues 672–681 (QDISVHKLKL) show a composition bias toward basic and acidic residues.

This sequence belongs to the MPP10 family. Part of the small subunit (SSU) processome, composed of more than 70 proteins and the RNA chaperone small nucleolar RNA (snoRNA) U3. Component of a heterotrimeric complex containing IMP3, IMP4 and MPHOSPH10. Interacts with IMP3 and IMP4. Post-translationally, phosphorylated in M (mitotic) phase.

The protein resides in the nucleus. Its subcellular location is the nucleolus. It localises to the chromosome. Functionally, component of the 60-80S U3 small nucleolar ribonucleoprotein (U3 snoRNP). Required for the early cleavages during pre-18S ribosomal RNA processing. Part of the small subunit (SSU) processome, first precursor of the small eukaryotic ribosomal subunit. During the assembly of the SSU processome in the nucleolus, many ribosome biogenesis factors, an RNA chaperone and ribosomal proteins associate with the nascent pre-rRNA and work in concert to generate RNA folding, modifications, rearrangements and cleavage as well as targeted degradation of pre-ribosomal RNA by the RNA exosome. This is U3 small nucleolar ribonucleoprotein protein MPP10 from Homo sapiens (Human).